The chain runs to 88 residues: Small ribosomal subunit protein bS20 (88 aa).

The disordered stretch occupies residues 1–20 (MANTAQARKRARQAVVQNAH).

The protein belongs to the bacterial ribosomal protein bS20 family.

Its function is as follows. Binds directly to 16S ribosomal RNA. The chain is Small ribosomal subunit protein bS20 from Ralstonia pickettii (strain 12J).